A 335-amino-acid polypeptide reads, in one-letter code: Ketol-acid reductoisomerase (NADP(+)) (335 aa).

The region spanning 1-182 (MATIIYDDET…GATRAGVYET (182 aa)) is the KARI N-terminal Rossmann domain. Residues 25-28 (YGSQ), R48, S51, S53, and 83-86 (DEKQ) contribute to the NADP(+) site. The active site involves H108. G134 is a binding site for NADP(+). One can recognise a KARI C-terminal knotted domain in the interval 183–328 (TFREETETDL…KQIRANIPWL (146 aa)). Mg(2+)-binding residues include D191, E195, E227, and E231. S252 lines the substrate pocket.

The protein belongs to the ketol-acid reductoisomerase family. Mg(2+) serves as cofactor.

It carries out the reaction (2R)-2,3-dihydroxy-3-methylbutanoate + NADP(+) = (2S)-2-acetolactate + NADPH + H(+). The catalysed reaction is (2R,3R)-2,3-dihydroxy-3-methylpentanoate + NADP(+) = (S)-2-ethyl-2-hydroxy-3-oxobutanoate + NADPH + H(+). It participates in amino-acid biosynthesis; L-isoleucine biosynthesis; L-isoleucine from 2-oxobutanoate: step 2/4. The protein operates within amino-acid biosynthesis; L-valine biosynthesis; L-valine from pyruvate: step 2/4. Its function is as follows. Involved in the biosynthesis of branched-chain amino acids (BCAA). Catalyzes an alkyl-migration followed by a ketol-acid reduction of (S)-2-acetolactate (S2AL) to yield (R)-2,3-dihydroxy-isovalerate. In the isomerase reaction, S2AL is rearranged via a Mg-dependent methyl migration to produce 3-hydroxy-3-methyl-2-ketobutyrate (HMKB). In the reductase reaction, this 2-ketoacid undergoes a metal-dependent reduction by NADPH to yield (R)-2,3-dihydroxy-isovalerate. This chain is Ketol-acid reductoisomerase (NADP(+)), found in Methanosarcina mazei (strain ATCC BAA-159 / DSM 3647 / Goe1 / Go1 / JCM 11833 / OCM 88) (Methanosarcina frisia).